The sequence spans 141 residues: Large ribosomal subunit protein uL11 (141 aa).

Belongs to the universal ribosomal protein uL11 family. In terms of assembly, part of the ribosomal stalk of the 50S ribosomal subunit. Interacts with L10 and the large rRNA to form the base of the stalk. L10 forms an elongated spine to which L12 dimers bind in a sequential fashion forming a multimeric L10(L12)X complex. One or more lysine residues are methylated.

Functionally, forms part of the ribosomal stalk which helps the ribosome interact with GTP-bound translation factors. This Brevibacillus brevis (strain 47 / JCM 6285 / NBRC 100599) protein is Large ribosomal subunit protein uL11.